Reading from the N-terminus, the 306-residue chain is Acetyl-coenzyme A carboxylase carboxyl transferase subunit beta (306 aa).

A CoA carboxyltransferase N-terminal domain is found at 27 to 296 (LWHKCPSCDA…PRFVAPVIEP (270 aa)). 4 residues coordinate Zn(2+): Cys31, Cys34, Cys50, and Cys53. Residues 31 to 53 (CPSCDAVLYRPELEKTLDVCPKC) form a C4-type zinc finger.

It belongs to the AccD/PCCB family. As to quaternary structure, acetyl-CoA carboxylase is a heterohexamer composed of biotin carboxyl carrier protein (AccB), biotin carboxylase (AccC) and two subunits each of ACCase subunit alpha (AccA) and ACCase subunit beta (AccD). Zn(2+) is required as a cofactor.

It localises to the cytoplasm. It catalyses the reaction N(6)-carboxybiotinyl-L-lysyl-[protein] + acetyl-CoA = N(6)-biotinyl-L-lysyl-[protein] + malonyl-CoA. It functions in the pathway lipid metabolism; malonyl-CoA biosynthesis; malonyl-CoA from acetyl-CoA: step 1/1. Its function is as follows. Component of the acetyl coenzyme A carboxylase (ACC) complex. Biotin carboxylase (BC) catalyzes the carboxylation of biotin on its carrier protein (BCCP) and then the CO(2) group is transferred by the transcarboxylase to acetyl-CoA to form malonyl-CoA. The polypeptide is Acetyl-coenzyme A carboxylase carboxyl transferase subunit beta (Pseudomonas syringae pv. tomato (strain ATCC BAA-871 / DC3000)).